A 512-amino-acid polypeptide reads, in one-letter code: Podocan-like protein 1 (512 aa).

The first 26 residues, M1–G26, serve as a signal peptide directing secretion. Residues E37–R74 enclose the LRRNT domain. N-linked (GlcNAc...) asparagine glycosylation is present at N71. LRR repeat units follow at residues A75–R96, G99–A119, Q125–S146, L147–E167, A170–G193, A196–P216, S217–R238, Q241–T261, S267–T288, L289–G309, G312–A332, G338–R359, L360–A380, G383–S396, A409–G430, L431–G451, and Q454–T474.

It belongs to the small leucine-rich proteoglycan (SLRP) family. SLRP class V subfamily. In terms of processing, N-glycosylated.

The protein localises to the secreted. It localises to the extracellular space. The protein resides in the extracellular matrix. This is Podocan-like protein 1 (PODNL1) from Homo sapiens (Human).